Consider the following 139-residue polypeptide: Protein archease (139 aa).

The Ca(2+) site is built by Asp-12, Asp-138, and Ile-139.

Belongs to the archease family.

Activates the tRNA-splicing ligase complex by facilitating the enzymatic turnover of catalytic subunit RtcB. Acts by promoting the guanylylation of RtcB, a key intermediate step in tRNA ligation. Can also alter the NTP specificity of RtcB such that ATP, dGTP or ITP is used efficiently. In Saccharolobus islandicus (strain Y.N.15.51 / Yellowstone #2) (Sulfolobus islandicus), this protein is Protein archease.